The sequence spans 399 residues: MTILGTALTTNATKVMLLGAGELGKEVIIECQRLGIETIAVDRYANAPAMHVAHRHYVVNMLDSEALKQIITQEKPDFLVPEIEAIATSLLVELENNGQKVVPCARAVKLTMDREGIRRLAAETLHLLTSPYQFVDDEAAFRKAAVEIGFPCIVKPVMSSSGKGQSVIRSEQDLTSAWTYSQEGGRAGQGRVIVEKMIPFDFEITLLTIRAIDGIHFCEPIGHRQEKGDYRASWQPQKMSDIALAKAQHIASKVVENLGGYGLFGVELFIQGDEVFFNEVSPRPHDTGLVTLISQDLSEFALHVRAFLGYPIGGIRQLGACASAVILPELSSTNIVYTGLEKALKANRQIRLFAKPEIAGHRRLGVVLAHADSIKHAIEEANLGAQAILAHDGDNHLSR.

N(1)-(5-phospho-beta-D-ribosyl)glycinamide-binding positions include 22–23 (EL) and Glu-82. Residues Arg-114, Lys-155, 160-165 (SSGKGQ), 195-198 (EKMI), and Glu-203 contribute to the ATP site. One can recognise an ATP-grasp domain in the interval 119 to 308 (RLAAETLHLL…EFALHVRAFL (190 aa)). The Mg(2+) site is built by Glu-267 and Glu-279. N(1)-(5-phospho-beta-D-ribosyl)glycinamide is bound by residues Asp-286, Lys-355, and 362 to 363 (RR).

It belongs to the PurK/PurT family. In terms of assembly, homodimer.

It catalyses the reaction N(1)-(5-phospho-beta-D-ribosyl)glycinamide + formate + ATP = N(2)-formyl-N(1)-(5-phospho-beta-D-ribosyl)glycinamide + ADP + phosphate + H(+). The protein operates within purine metabolism; IMP biosynthesis via de novo pathway; N(2)-formyl-N(1)-(5-phospho-D-ribosyl)glycinamide from N(1)-(5-phospho-D-ribosyl)glycinamide (formate route): step 1/1. Involved in the de novo purine biosynthesis. Catalyzes the transfer of formate to 5-phospho-ribosyl-glycinamide (GAR), producing 5-phospho-ribosyl-N-formylglycinamide (FGAR). Formate is provided by PurU via hydrolysis of 10-formyl-tetrahydrofolate. This chain is Formate-dependent phosphoribosylglycinamide formyltransferase, found in Proteus mirabilis (strain HI4320).